We begin with the raw amino-acid sequence, 376 residues long: Erythronate-4-phosphate dehydrogenase (376 aa).

Ser-45 and Thr-67 together coordinate substrate. Asp-147 contacts NAD(+). The active site involves Arg-209. Asp-233 is a binding site for NAD(+). Glu-238 is a catalytic residue. His-255 serves as the catalytic Proton donor. Residue Gly-258 coordinates NAD(+). Tyr-259 contacts substrate.

It belongs to the D-isomer specific 2-hydroxyacid dehydrogenase family. PdxB subfamily. Homodimer.

It is found in the cytoplasm. The catalysed reaction is 4-phospho-D-erythronate + NAD(+) = (R)-3-hydroxy-2-oxo-4-phosphooxybutanoate + NADH + H(+). It participates in cofactor biosynthesis; pyridoxine 5'-phosphate biosynthesis; pyridoxine 5'-phosphate from D-erythrose 4-phosphate: step 2/5. In terms of biological role, catalyzes the oxidation of erythronate-4-phosphate to 3-hydroxy-2-oxo-4-phosphonooxybutanoate. This Shewanella sp. (strain ANA-3) protein is Erythronate-4-phosphate dehydrogenase.